The chain runs to 124 residues: MNVLLIFLGCGAGGVARYGVSNLMYLLMGKQFPIGTLIVNITGSLLMGILFIFILERLSGNIQLWRSLLLIGFLGGYTTFSSFSIETFNLIEAGHYFVAALNVLLSVALCIAGAWLGVLIGRQL.

Helical transmembrane passes span 3–23, 34–54, 68–88, and 100–120; these read VLLI…VSNL, IGTL…FIFI, LLLI…IETF, and ALNV…GVLI. Na(+)-binding residues include glycine 75 and threonine 78.

Belongs to the fluoride channel Fluc/FEX (TC 1.A.43) family.

The protein localises to the cell inner membrane. It carries out the reaction fluoride(in) = fluoride(out). With respect to regulation, na(+) is not transported, but it plays an essential structural role and its presence is essential for fluoride channel function. Its function is as follows. Fluoride-specific ion channel. Important for reducing fluoride concentration in the cell, thus reducing its toxicity. In Coxiella burnetii (strain CbuK_Q154) (Coxiella burnetii (strain Q154)), this protein is Fluoride-specific ion channel FluC.